The primary structure comprises 60 residues: Small ribosomal subunit protein uS10 (60 aa).

The protein belongs to the universal ribosomal protein uS10 family.

The polypeptide is Small ribosomal subunit protein uS10 (RPS20) (Zea mays (Maize)).